Here is a 132-residue protein sequence, read N- to C-terminus: uncharacterized protein (132 aa).

Residues 45–115 (VHMEKHKLKI…VVIVTTAEGK (71 aa)) enclose the BIG2 domain.

It to B.anthracis BA1245.

This is an uncharacterized protein from Bacillus cereus (strain ATCC 14579 / DSM 31 / CCUG 7414 / JCM 2152 / NBRC 15305 / NCIMB 9373 / NCTC 2599 / NRRL B-3711).